The sequence spans 190 residues: Nodulation protein L (190 aa).

This sequence belongs to the transferase hexapeptide repeat family.

Functionally, acetyltransferase implicated in the O-acetylation of Nod factors. This chain is Nodulation protein L (nodL), found in Rhizobium leguminosarum bv. viciae.